A 594-amino-acid polypeptide reads, in one-letter code: Proline--tRNA ligase (594 aa).

The protein belongs to the class-II aminoacyl-tRNA synthetase family. ProS type 1 subfamily. As to quaternary structure, homodimer.

It localises to the cytoplasm. The enzyme catalyses tRNA(Pro) + L-proline + ATP = L-prolyl-tRNA(Pro) + AMP + diphosphate. Catalyzes the attachment of proline to tRNA(Pro) in a two-step reaction: proline is first activated by ATP to form Pro-AMP and then transferred to the acceptor end of tRNA(Pro). As ProRS can inadvertently accommodate and process non-cognate amino acids such as alanine and cysteine, to avoid such errors it has two additional distinct editing activities against alanine. One activity is designated as 'pretransfer' editing and involves the tRNA(Pro)-independent hydrolysis of activated Ala-AMP. The other activity is designated 'posttransfer' editing and involves deacylation of mischarged Ala-tRNA(Pro). The misacylated Cys-tRNA(Pro) is not edited by ProRS. This chain is Proline--tRNA ligase, found in Synechococcus sp. (strain WH7803).